We begin with the raw amino-acid sequence, 129 residues long: Protein Turandot A2 (129 aa).

Residues 1–21 (MNSSTSLMCFALLLISPLCMG) form the signal peptide. The N-linked (GlcNAc...) asparagine glycan is linked to asparagine 49.

This sequence belongs to the Turandot family.

It localises to the secreted. A humoral factor that plays a role in stress tolerance; gives increased resistance to the lethal effects of bacterial challenge and stress. Regulated by the JAK/STAT pathway and NF-KB-like Relish pathway in the fat body, upd3 in the hemocytes and Mekk1 in response to septic injury and consequent immune response. This is Protein Turandot A2 (TotA2) from Drosophila simulans (Fruit fly).